A 605-amino-acid chain; its full sequence is Membrane protein insertase YidC (605 aa).

Residues Met8–Ala28 traverse the membrane as a helical segment. Residues Arg35–Pro47 show a composition bias toward low complexity. Positions Arg35–Ala71 are disordered. A run of 4 helical transmembrane segments spans residues Leu377–Leu397, Trp451–Ile471, Leu496–Val516, and Phe540–Ile560.

Belongs to the OXA1/ALB3/YidC family. Type 1 subfamily. In terms of assembly, interacts with the Sec translocase complex via SecD. Specifically interacts with transmembrane segments of nascent integral membrane proteins during membrane integration.

It is found in the cell inner membrane. In terms of biological role, required for the insertion and/or proper folding and/or complex formation of integral membrane proteins into the membrane. Involved in integration of membrane proteins that insert both dependently and independently of the Sec translocase complex, as well as at least some lipoproteins. Aids folding of multispanning membrane proteins. The sequence is that of Membrane protein insertase YidC from Methylobacterium nodulans (strain LMG 21967 / CNCM I-2342 / ORS 2060).